The primary structure comprises 248 residues: Probable transcriptional regulatory protein Syncc9902_0542 (248 aa).

This sequence belongs to the TACO1 family.

It is found in the cytoplasm. The chain is Probable transcriptional regulatory protein Syncc9902_0542 from Synechococcus sp. (strain CC9902).